We begin with the raw amino-acid sequence, 557 residues long: CTP synthase (557 aa).

The tract at residues 1–270 is amidoligase domain; sequence MTKYVFVTGG…DAIICEELKL (270 aa). Residue S13 participates in CTP binding. S13 contributes to the UTP binding site. ATP contacts are provided by residues 14 to 19 and D71; that span reads SLGKGI. D71 and E144 together coordinate Mg(2+). CTP is bound by residues 151-153, 191-196, and K227; these read DIE and KTKPTQ. Residues 191-196 and K227 each bind UTP; that span reads KTKPTQ. Positions 295-547 constitute a Glutamine amidotransferase type-1 domain; sequence TIGMVGKYVD…VEAALAHQQS (253 aa). G356 contacts L-glutamine. Catalysis depends on C383, which acts as the Nucleophile; for glutamine hydrolysis. L-glutamine contacts are provided by residues 384–387, E407, and R473; that span reads LGMQ. Active-site residues include H520 and E522.

Belongs to the CTP synthase family. In terms of assembly, homotetramer.

It carries out the reaction UTP + L-glutamine + ATP + H2O = CTP + L-glutamate + ADP + phosphate + 2 H(+). The catalysed reaction is L-glutamine + H2O = L-glutamate + NH4(+). It catalyses the reaction UTP + NH4(+) + ATP = CTP + ADP + phosphate + 2 H(+). The protein operates within pyrimidine metabolism; CTP biosynthesis via de novo pathway; CTP from UDP: step 2/2. With respect to regulation, allosterically activated by GTP, when glutamine is the substrate; GTP has no effect on the reaction when ammonia is the substrate. The allosteric effector GTP functions by stabilizing the protein conformation that binds the tetrahedral intermediate(s) formed during glutamine hydrolysis. Inhibited by the product CTP, via allosteric rather than competitive inhibition. Its function is as follows. Catalyzes the ATP-dependent amination of UTP to CTP with either L-glutamine or ammonia as the source of nitrogen. Regulates intracellular CTP levels through interactions with the four ribonucleotide triphosphates. This Paraburkholderia xenovorans (strain LB400) protein is CTP synthase.